The following is a 334-amino-acid chain: Glycerol-1-phosphate dehydrogenase [NAD(P)+] (334 aa).

NAD(+) is bound by residues Gly-77–Asp-81 and Thr-99–Ser-102. Asp-104 lines the substrate pocket. An NAD(+)-binding site is contributed by Ser-108. Asp-147 contacts substrate. Positions 147 and 225 each coordinate Zn(2+). His-229 is a substrate binding site. Residue His-246 coordinates Zn(2+).

This sequence belongs to the glycerol-1-phosphate dehydrogenase family. It depends on Zn(2+) as a cofactor.

The protein resides in the cytoplasm. It carries out the reaction sn-glycerol 1-phosphate + NAD(+) = dihydroxyacetone phosphate + NADH + H(+). It catalyses the reaction sn-glycerol 1-phosphate + NADP(+) = dihydroxyacetone phosphate + NADPH + H(+). It functions in the pathway membrane lipid metabolism; glycerophospholipid metabolism. In terms of biological role, catalyzes the NAD(P)H-dependent reduction of dihydroxyacetonephosphate (DHAP or glycerone phosphate) to glycerol 1-phosphate (G1P). The G1P thus generated is used as the glycerophosphate backbone of phospholipids in the cellular membranes of Archaea. The protein is Glycerol-1-phosphate dehydrogenase [NAD(P)+] of Methanococcus maripaludis (strain C7 / ATCC BAA-1331).